The chain runs to 85 residues: Small ribosomal subunit protein bS20 (85 aa).

Residues 1–24 (MANIKSAIKRAKLSEERRSHNASI) form a disordered region.

Belongs to the bacterial ribosomal protein bS20 family.

Binds directly to 16S ribosomal RNA. In Bacillus mycoides (strain KBAB4) (Bacillus weihenstephanensis), this protein is Small ribosomal subunit protein bS20.